The chain runs to 489 residues: Ketol-acid reductoisomerase (NADP(+)) (489 aa).

A KARI N-terminal Rossmann domain is found at 16 to 207 (LRKCKLVEKN…GSHRAGVLHS (192 aa)). Residues 44 to 47 (CGSQ), arginine 67, serine 77, and 107 to 109 (DKQ) each bind NADP(+). Histidine 131 is a catalytic residue. Glycine 157 serves as a coordination point for NADP(+). KARI C-terminal knotted domains lie at 208-343 (SFIA…KCKI) and 344-483 (CHKE…MVDM). 4 residues coordinate Mg(2+): aspartate 216, glutamate 220, glutamate 388, and glutamate 392. Residue serine 413 coordinates substrate.

Belongs to the ketol-acid reductoisomerase family. It depends on Mg(2+) as a cofactor.

It catalyses the reaction (2R)-2,3-dihydroxy-3-methylbutanoate + NADP(+) = (2S)-2-acetolactate + NADPH + H(+). It carries out the reaction (2R,3R)-2,3-dihydroxy-3-methylpentanoate + NADP(+) = (S)-2-ethyl-2-hydroxy-3-oxobutanoate + NADPH + H(+). Its pathway is amino-acid biosynthesis; L-isoleucine biosynthesis; L-isoleucine from 2-oxobutanoate: step 2/4. The protein operates within amino-acid biosynthesis; L-valine biosynthesis; L-valine from pyruvate: step 2/4. Involved in the biosynthesis of branched-chain amino acids (BCAA). Catalyzes an alkyl-migration followed by a ketol-acid reduction of (S)-2-acetolactate (S2AL) to yield (R)-2,3-dihydroxy-isovalerate. In the isomerase reaction, S2AL is rearranged via a Mg-dependent methyl migration to produce 3-hydroxy-3-methyl-2-ketobutyrate (HMKB). In the reductase reaction, this 2-ketoacid undergoes a metal-dependent reduction by NADPH to yield (R)-2,3-dihydroxy-isovalerate. The sequence is that of Ketol-acid reductoisomerase (NADP(+)) from Buchnera aphidicola subsp. Schlechtendalia chinensis.